Reading from the N-terminus, the 474-residue chain is E3 ubiquitin-protein ligase CBL-C (474 aa).

A 4H region spans residues 7 to 145 (PWGRQWEEAR…HALFPGGKYC (139 aa)). Residues 7–321 (PWGRQWEEAR…GKTHNPDLTE (315 aa)) enclose the Cbl-PTB domain. The EF-hand-like stretch occupies residues 146–218 (GHMYQLTKAP…FEFDVFTRLF (73 aa)). 3 residues coordinate Ca(2+): Asp-199, Thr-201, and Glu-210. The interval 219 to 321 (QPWPTLLKNW…GKTHNPDLTE (103 aa)) is SH2-like. Residue Arg-264 coordinates 4-O-phospho-L-tyrosine. The linker stretch occupies residues 322 to 350 (LGQAEPQQRIHVSEEQLQLYWAMDSTFEL). Residue Tyr-341 is modified to Phosphotyrosine; by SRC. An RING-type zinc finger spans residues 351-390 (CKICAESNKDVKIEPCGHLLCSCCLAAWQHSDSQTCPFCR). Residues 351–474 (CKICAESNKD…ALGPQDPAPA (124 aa)) are interaction with RET. A disordered region spans residues 409 to 474 (TAEDSGNSSD…ALGPQDPAPA (66 aa)). Pro residues predominate over residues 432–441 (SAPPLPPRPD).

As to quaternary structure, interacts with ubiquitin-conjugating enzyme E2 UBE2D2 and UBE2D3. Isoform 1 interacts with EGFR (tyrosine phosphorylated). Interacts with the SH3 domain proteins LYN and CRK. Interacts (via RING-type zinc finger) with TGFB1I1 (via LIM zinc-binding domain 2); the interaction is direct and enhances the E3 activity. Interacts directly with RET (inactive) and CD2AP; dissociates from RET upon RET activation by GDNF which also increases the interaction with CD2AP suggesting dissociation as CBLC:CD2AP complex. Interacts with SRC; the interaction is enhanced when SRC is phosphorylated at 'Tyr-419'. Post-translationally, phosphorylated on multiple tyrosine residues by SRC. Isoform 1, but not isoform 2, is phosphorylated on tyrosines by EGFR. In terms of processing, autoubiquitinated when phosphorylated at Tyr-341, enhanced by SRC; suggesting proteasomal degradation. In terms of tissue distribution, ubiquitous.

The catalysed reaction is S-ubiquitinyl-[E2 ubiquitin-conjugating enzyme]-L-cysteine + [acceptor protein]-L-lysine = [E2 ubiquitin-conjugating enzyme]-L-cysteine + N(6)-ubiquitinyl-[acceptor protein]-L-lysine.. Phosphorylation at Tyr-341 is necessary and sufficient for the activation of E3 activity. Acts as an E3 ubiquitin-protein ligase, which accepts ubiquitin from specific E2 ubiquitin-conjugating enzymes, and then transfers it to substrates promoting their degradation by the proteasome. Functionally coupled with the E2 ubiquitin-protein ligases UB2D1, UB2D2 and UB2D3. Regulator of EGFR mediated signal transduction; upon EGF activation, ubiquitinates EGFR. Isoform 1, but not isoform 2, inhibits EGF stimulated MAPK1 activation. Promotes ubiquitination of SRC phosphorylated at 'Tyr-419'. In collaboration with CD2AP may act as regulatory checkpoint for Ret signaling by modulating the rate of RET degradation after ligand activation; CD2AP converts it from an inhibitor to a promoter of RET degradation; the function limits the potency of GDNF on neuronal survival. In Homo sapiens (Human), this protein is E3 ubiquitin-protein ligase CBL-C (CBLC).